The sequence spans 122 residues: Large ribosomal subunit protein uL14 (122 aa).

Belongs to the universal ribosomal protein uL14 family. Part of the 50S ribosomal subunit. Forms a cluster with proteins L3 and L19. In the 70S ribosome, L14 and L19 interact and together make contacts with the 16S rRNA in bridges B5 and B8.

Functionally, binds to 23S rRNA. Forms part of two intersubunit bridges in the 70S ribosome. In Paraburkholderia phymatum (strain DSM 17167 / CIP 108236 / LMG 21445 / STM815) (Burkholderia phymatum), this protein is Large ribosomal subunit protein uL14.